The following is a 131-amino-acid chain: Small ribosomal subunit protein bS6 (131 aa).

The disordered stretch occupies residues 98 to 131 (EASPMVKAKDERRERRDDFANETADDSDAGDSEE). Basic and acidic residues predominate over residues 104–116 (KAKDERRERRDDF). Over residues 120–131 (TADDSDAGDSEE) the composition is skewed to acidic residues.

It belongs to the bacterial ribosomal protein bS6 family.

Its function is as follows. Binds together with bS18 to 16S ribosomal RNA. The sequence is that of Small ribosomal subunit protein bS6 from Enterobacter sp. (strain 638).